The following is a 207-amino-acid chain: NADH-quinone oxidoreductase chain 5 (207 aa).

Belongs to the complex I 30 kDa subunit family. As to quaternary structure, NDH-1 is composed of at least 14 different subunits, Nqo1 to Nqo14. The complex has a L-shaped structure, with the hydrophobic arm (subunits Nqo7, Nqo8, Nqo10 to Nqo14) embedded in the inner membrane and the hydrophilic peripheral arm (subunits Nqo1 to Nqo6, Nqo9) protruding into the bacterial cytoplasm. The hydrophilic domain contains all the redox centers.

The protein localises to the cell inner membrane. It carries out the reaction a quinone + NADH + 5 H(+)(in) = a quinol + NAD(+) + 4 H(+)(out). In terms of biological role, NDH-1 shuttles electrons from NADH, via FMN and iron-sulfur (Fe-S) centers, to quinones in the respiratory chain. The immediate electron acceptor for the enzyme in this species is believed to be ubiquinone. Couples the redox reaction to proton translocation (for every two electrons transferred, four hydrogen ions are translocated across the cytoplasmic membrane), and thus conserves the redox energy in a proton gradient. This Paracoccus denitrificans protein is NADH-quinone oxidoreductase chain 5 (nqo5).